A 193-amino-acid chain; its full sequence is Putative zinc finger protein 726P1 (193 aa).

A C2H2-type 1; degenerate zinc finger spans residues 18–40 (YKCKKCGKTFNWSSILTNNKKIH). The C2H2-type 2; atypical zinc finger occupies 46–68 (YKCEECGKAFKQHSTLTTHKIIC). A C2H2-type 3; degenerate zinc finger spans residues 74–96 (YRCEECGKAFCQPSTLTRYKRMH). The C2H2-type 4 zinc-finger motif lies at 102 to 124 (YKCEECGKAFTQFSTLTKHKRIH). The segment at 130–152 (YKCEESGKAFIWSSGLTEHRRVH) adopts a C2H2-type 5; degenerate zinc-finger fold. The segment at 158-180 (YKCEECGKALIQFSTLTRHKRIH) adopts a C2H2-type 6 zinc-finger fold.

In Homo sapiens (Human), this protein is Putative zinc finger protein 726P1 (ZNF726P1).